The following is a 92-amino-acid chain: Small ribosomal subunit protein bS20 (92 aa).

It belongs to the bacterial ribosomal protein bS20 family.

Functionally, binds directly to 16S ribosomal RNA. The sequence is that of Small ribosomal subunit protein bS20 from Rickettsia conorii (strain ATCC VR-613 / Malish 7).